The primary structure comprises 845 residues: Translation initiation factor IF-2 (845 aa).

Disordered stretches follow at residues 45-91 and 127-209; these read RRKI…SNLS and EESL…TPKV. Residues 81-91 are compositionally biased toward polar residues; the sequence is SESSMAKSNLS. The span at 137-149 shows a compositional bias: basic and acidic residues; sequence TEIHQEEQKEEKN. A compositionally biased stretch (polar residues) spans 151–162; the sequence is PVQTSPLSSAHS. Basic and acidic residues predominate over residues 179–193; it reads TEKRKADEIKNDDRH. The tr-type G domain occupies 343-512; that stretch reads PRPPVVTIMG…LLQAELLDLK (170 aa). Positions 352-359 are G1; the sequence is GHVDHGKT. Position 352 to 359 (352 to 359) interacts with GTP; it reads GHVDHGKT. The G2 stretch occupies residues 377 to 381; the sequence is GITQH. The G3 stretch occupies residues 398 to 401; sequence DTPG. GTP contacts are provided by residues 398 to 402 and 452 to 455; these read DTPGH and NKID. The tract at residues 452–455 is G4; the sequence is NKID. Residues 488-490 are G5; the sequence is SAK.

The protein belongs to the TRAFAC class translation factor GTPase superfamily. Classic translation factor GTPase family. IF-2 subfamily.

The protein resides in the cytoplasm. One of the essential components for the initiation of protein synthesis. Protects formylmethionyl-tRNA from spontaneous hydrolysis and promotes its binding to the 30S ribosomal subunits. Also involved in the hydrolysis of GTP during the formation of the 70S ribosomal complex. In Bartonella quintana (strain Toulouse) (Rochalimaea quintana), this protein is Translation initiation factor IF-2.